The chain runs to 226 residues: Ribonuclease 3 (226 aa).

The 123-residue stretch at 5 to 127 (TFQRGDPIGH…IVAAIYLDCG (123 aa)) folds into the RNase III domain. Position 40 (Glu40) interacts with Mg(2+). Asp44 is a catalytic residue. The Mg(2+) site is built by Asp113 and Glu116. Residue Glu116 is part of the active site. Residues 154-224 (DPKTRLQEWL…ATLVIAQLDS (71 aa)) form the DRBM domain.

Belongs to the ribonuclease III family. As to quaternary structure, homodimer. Mg(2+) serves as cofactor.

It localises to the cytoplasm. It catalyses the reaction Endonucleolytic cleavage to 5'-phosphomonoester.. Digests double-stranded RNA. Involved in the processing of primary rRNA transcript to yield the immediate precursors to the large and small rRNAs (23S and 16S). Processes some mRNAs, and tRNAs when they are encoded in the rRNA operon. Processes pre-crRNA and tracrRNA of type II CRISPR loci if present in the organism. The sequence is that of Ribonuclease 3 from Xanthomonas axonopodis pv. citri (strain 306).